Here is a 602-residue protein sequence, read N- to C-terminus: Pyranose dehydrogenase 1 (602 aa).

An N-terminal signal peptide occupies residues 1 to 25 (MLPRVTKLNSRLLSLALLGIQIARG). N-linked (GlcNAc...) asparagine glycosylation occurs at Asn-100. At His-128 the chain carries Tele-8alpha-FAD histidine. N-linked (GlcNAc...) asparagine glycosylation is found at Asn-200, Asn-277, and Asn-344. His-537 (proton acceptor) is an active-site residue. His-581 is an active-site residue.

The protein belongs to the GMC oxidoreductase family. In terms of assembly, monomer. Requires FAD as cofactor. In terms of processing, N-glycosylated.

Its subcellular location is the secreted. It catalyses the reaction pyranose + acceptor = pyranos-2-ulose + reduced acceptor.. It carries out the reaction pyranose + acceptor = pyranos-3-ulose + reduced acceptor.. The catalysed reaction is pyranose + acceptor = pyranos-2,3-diulose + reduced acceptor.. The enzyme catalyses a pyranoside + acceptor = a pyranosid-3-ulose + reduced acceptor.. It catalyses the reaction a pyranoside + acceptor = a pyranosid-3,4-diulose + reduced acceptor.. In terms of biological role, catalyzes the single-oxidation or sequential double oxidation reaction of carbohydrates primarily at carbon-2 and/or carbon-3 with the concomitant reduction of the flavin. The enzyme exhibits a broad sugar substrate specificity, oxidizing different aldopyranoses to the corresponding C-1, C-2, C-3 or C-1,2, C-2,3 and C-3,4 (di)dehydro sugars with substrate-specific regioselectivity. Accepts only a narrow range of electron acceptors such as substituted benzoquinones and complexed metal ions and reacts extremely slowly with O(2) as acceptor. May play a role in the natural recycling of plant matter by oxidizing all major monosaccharides in lignocellulose and by reducing quinone compounds or reactive radical species generated during lignin depolymerization. The polypeptide is Pyranose dehydrogenase 1 (Leucoagaricus meleagris (Western flat-topped agaric)).